Consider the following 213-residue polypeptide: uncharacterized protein (213 aa).

Residues glycine 53, glutamate 74, and aspartate 96 each coordinate S-adenosyl-L-methionine.

This sequence belongs to the methyltransferase superfamily. YrrT family.

Could be a S-adenosyl-L-methionine-dependent methyltransferase. This is an uncharacterized protein from Oceanobacillus iheyensis (strain DSM 14371 / CIP 107618 / JCM 11309 / KCTC 3954 / HTE831).